A 920-amino-acid chain; its full sequence is Nonribosomal peptide synthetase atrA (920 aa).

Residues 13–428 form an adenylation (A) domain region; sequence AAAQERCGRV…AGRLKETMII (416 aa). The 80-residue stretch at 558–637 folds into the Carrier domain; that stretch reads PPKDELERSL…ELSAALHDLQ (80 aa). Ser595 bears the O-(pantetheine 4'-phosphoryl)serine mark. The tract at residues 656–905 is thioesterase (TE) domain; the sequence is PLWLIHPGVG…YTMLAPEHVF (250 aa).

This sequence belongs to the NRP synthetase family.

It carries out the reaction 2 3-(4-hydroxyphenyl)pyruvate + 2 ATP = atromentin + 2 AMP + 2 diphosphate + H(+). Functionally, nonribosomal peptide synthetase that mediates the biosynthesis of atromentin. AtrA first activates 4-hydroxyphenylpyruvate (HPPA) through its A domain to AMP-HPPA. The HPPA unit is then loaded to the T domain and eventually transferred to the TE domain. Another HPPA unit is then loaded onto the T domain. The TE domain then catalyzes the condensation of the two HPPA units and the release of atromentin via cyclization. The chain is Nonribosomal peptide synthetase atrA from Aspergillus terreus (strain NIH 2624 / FGSC A1156).